The primary structure comprises 213 residues: Holliday junction branch migration complex subunit RuvA (213 aa).

A domain I region spans residues 1 to 69 (MISYLKGIVA…EEIPLLYGFS (69 aa)). The interval 70 to 148 (SPAERDLFRH…EWRKSAGFFV (79 aa)) is domain II. The flexible linker stretch occupies residues 149-158 (ATEGPAPGIL). The domain III stretch occupies residues 158-213 (LEEVQMTLFALGYTAHEVSHALHVVSEDIGLPKDAYVEDWIKQAIAHLSSSEQVSH).

Belongs to the RuvA family. Homotetramer. Forms an RuvA(8)-RuvB(12)-Holliday junction (HJ) complex. HJ DNA is sandwiched between 2 RuvA tetramers; dsDNA enters through RuvA and exits via RuvB. An RuvB hexamer assembles on each DNA strand where it exits the tetramer. Each RuvB hexamer is contacted by two RuvA subunits (via domain III) on 2 adjacent RuvB subunits; this complex drives branch migration. In the full resolvosome a probable DNA-RuvA(4)-RuvB(12)-RuvC(2) complex forms which resolves the HJ.

It is found in the cytoplasm. The RuvA-RuvB-RuvC complex processes Holliday junction (HJ) DNA during genetic recombination and DNA repair, while the RuvA-RuvB complex plays an important role in the rescue of blocked DNA replication forks via replication fork reversal (RFR). RuvA specifically binds to HJ cruciform DNA, conferring on it an open structure. The RuvB hexamer acts as an ATP-dependent pump, pulling dsDNA into and through the RuvAB complex. HJ branch migration allows RuvC to scan DNA until it finds its consensus sequence, where it cleaves and resolves the cruciform DNA. The sequence is that of Holliday junction branch migration complex subunit RuvA from Nostoc sp. (strain PCC 7120 / SAG 25.82 / UTEX 2576).